The following is an 86-amino-acid chain: Maxadilan (86 aa).

The first 23 residues, 1 to 23 (MKQILLISLVVVLAVFAFNVAEG), serve as a signal peptide directing secretion. Intrachain disulfides connect Cys24–Cys28 and Cys37–Cys74.

In terms of assembly, interacts with human ADCYAP1R1. Salivary gland (at protein level).

It is found in the secreted. Functionally, potent vasodilator. Activates mammalian ADCYAP1R1, a PAC1 receptor, and induces cAMP accumulation in host cells. Causes the development of erythema following superficial injection into the rabbit or human skin. Influences adaptive immune responses mediated by host dendritic cells. Reduces surface expression of CD80 on host dendritic cells stimulated with lipopolysaccharides (LPS) and induces concomitant increase in CD86 expression on a subpopulation of these cells. Redirects cytokine secretion by LPS-activated host dendritic cells toward type 2 responses: decreases secretion of TNF-alpha/TNF, IL-12p40/IL12B and IFN-gamma/IFNG, and increases secretion of IL6 and IL10. Reduces ability of host bone marrow-derived dendritic cells to stimulate proliferation of CD4(+) T-cells. Reprograms the effect of LPS-activated host dendritic cells on cytokine secretion profiles in host T-cells: decreases secretion of TNF-alpha/TNF and IFN-gamma/IFNG, increases secretion of IL6 and IL13, and increases secretion of pro-inflammatory cytokine IL-1beta/IL1B in mixed lymphocyte reaction (MLR) cultures. Reduces LPS-induced up-regulation of CCR7 in activated host dendritic cells. Inhibits IFN-gamma/IFNG and IL-12p40/IL12B production by human peripheral blood mononuclear cells. Increases IL6 and decreases TNF-alpha/TNF production by LPS-stimulated human monocytes. Its function is as follows. (Microbial infection) Probably plays a critical role in the enhancement of Leishmania infectivity in the host attributed to sand fly saliva. The protein is Maxadilan of Lutzomyia longipalpis (Sand fly).